The following is a 211-amino-acid chain: Troponin I, cardiac muscle (211 aa).

The residue at position 1 (A1) is an N-acetylalanine. The tract at residues 1–43 is disordered; sequence ADESRDAAGEARPAPAPVRRRSSANYRAYATEPHAKSKKKISA. A Phosphoserine modification is found at S4. At S22 the chain carries Phosphoserine; by PHK, PKA and PKD/PRKD1. Residue S23 is modified to Phosphoserine; by PKA and PKD/PRKD1. At Y26 the chain carries Phosphotyrosine. T31 bears the Phosphothreonine; by STK4/MST1 mark. Residues 32 to 79 form an involved in binding TNC region; it reads EPHAKSKKKISASRKLQLKTLMLQIAKQELEREAEERRGEKGRALSTR. 2 positions are modified to phosphoserine; by PKC/PRKCE: S42 and S44. A Phosphothreonine; by STK4/MST1 modification is found at T51. Position 77 is a phosphoserine (S77). A Phosphothreonine modification is found at T78. Phosphothreonine; by STK4/MST1 is present on residues T129 and T143. The involved in binding TNC and actin stretch occupies residues 129-150; it reads TQKIFDLRGKFKRPTLRLRVRI. S151 carries the post-translational modification Phosphoserine; by PAK3. Residue T182 is modified to Phosphothreonine. S200 bears the Phosphoserine mark.

It belongs to the troponin I family. In terms of assembly, interacts with TRIM63. Binds to actin and tropomyosin. Interacts with STK4/MST1. In terms of processing, phosphorylated at Ser-22 and Ser-23 by PRKD1; phosphorylation reduces myofilament calcium sensitivity. Phosphorylated preferentially at Thr-31. Phosphorylation by STK4/MST1 alters its binding affinity to TNNC1 (cardiac Tn-C) and TNNT2 (cardiac Tn-T). Phosphorylated at Ser-42 and Ser-44 by PRKCE; phosphorylation increases myocardium contractile dysfunction. Ser-22 is one of three sites in the region of residues 1-48 that are phosphorylated by phosphorylase kinase.

Troponin I is the inhibitory subunit of troponin, the thin filament regulatory complex which confers calcium-sensitivity to striated muscle actomyosin ATPase activity. This chain is Troponin I, cardiac muscle (TNNI3), found in Oryctolagus cuniculus (Rabbit).